The primary structure comprises 224 residues: Peptidyl-prolyl cis-trans isomerase FKBP3 (224 aa).

Alanine 2 carries the N-acetylalanine modification. At serine 36 the chain carries Phosphoserine. Over residues 89 to 102 (KLNEDKPKETKSEE) the composition is skewed to basic and acidic residues. Positions 89–113 (KLNEDKPKETKSEETLDEGPPKYTK) are disordered. N6-acetyllysine is present on lysine 99. A PPIase FKBP-type domain is found at 128-224 (GDVVHCWYTG…IFEVELVDID (97 aa)). Serine 152 carries the post-translational modification Phosphoserine. Lysine 170 bears the N6-acetyllysine mark.

The protein belongs to the FKBP-type PPIase family.

It localises to the nucleus. The catalysed reaction is [protein]-peptidylproline (omega=180) = [protein]-peptidylproline (omega=0). Inhibited preferentially by rapamycin over FK506. Its function is as follows. FK506- and rapamycin-binding proteins (FKBPs) constitute a family of receptors for the two immunosuppressants which inhibit T-cell proliferation by arresting two dinstinct cytoplasmic signal transmission pathways. PPIases accelerate the folding of proteins. This chain is Peptidyl-prolyl cis-trans isomerase FKBP3 (FKBP3), found in Bos taurus (Bovine).